The sequence spans 224 residues: Protein HLJ1 (224 aa).

The region spanning 18 to 87 (DKHEFYEILK…RSIYDRIGRD (70 aa)) is the J domain. Residues 84–93 (IGRDPDDRQM) are compositionally biased toward basic and acidic residues. A disordered region spans residues 84 to 107 (IGRDPDDRQMPSRGAASGFRGSAG). Residue S109 is modified to Phosphoserine. The disordered stretch occupies residues 173–192 (NRGGSPFMRQQPRSRQQQQQ). The segment covering 181-192 (RQQPRSRQQQQQ) has biased composition (low complexity).

The polypeptide is Protein HLJ1 (HLJ1) (Saccharomyces cerevisiae (strain ATCC 204508 / S288c) (Baker's yeast)).